The sequence spans 72 residues: Translation initiation factor IF-1 (72 aa).

Positions 1–72 (MSKQDVIELE…SRGRITWRKK (72 aa)) constitute an S1-like domain.

Belongs to the IF-1 family. As to quaternary structure, component of the 30S ribosomal translation pre-initiation complex which assembles on the 30S ribosome in the order IF-2 and IF-3, IF-1 and N-formylmethionyl-tRNA(fMet); mRNA recruitment can occur at any time during PIC assembly.

It localises to the cytoplasm. One of the essential components for the initiation of protein synthesis. Stabilizes the binding of IF-2 and IF-3 on the 30S subunit to which N-formylmethionyl-tRNA(fMet) subsequently binds. Helps modulate mRNA selection, yielding the 30S pre-initiation complex (PIC). Upon addition of the 50S ribosomal subunit IF-1, IF-2 and IF-3 are released leaving the mature 70S translation initiation complex. The chain is Translation initiation factor IF-1 from Alkaliphilus oremlandii (strain OhILAs) (Clostridium oremlandii (strain OhILAs)).